An 86-amino-acid polypeptide reads, in one-letter code: MLSNSTSRNRHSKHNKKNTREDFDGYYFNKNVVICDDKGQKITAKVYKTSKYWLMLKTSDGKTIFMNKAFIKSIELAEEEEKDDLA.

Residues 1 to 21 form a disordered region; the sequence is MLSNSTSRNRHSKHNKKNTRE. A compositionally biased stretch (basic residues) spans 8-17; sequence RNRHSKHNKK.

This is an uncharacterized protein from Acidianus convivator (ATV).